Reading from the N-terminus, the 394-residue chain is Histidinol dehydrogenase (394 aa).

NAD(+) contacts are provided by tyrosine 113, glutamine 172, and asparagine 195. Positions 218, 240, and 243 each coordinate substrate. Zn(2+) contacts are provided by glutamine 240 and histidine 243. Catalysis depends on proton acceptor residues glutamate 294 and histidine 295. Residues histidine 295, aspartate 327, glutamate 380, and histidine 385 each contribute to the substrate site. Aspartate 327 contacts Zn(2+). Histidine 385 contributes to the Zn(2+) binding site.

The protein belongs to the histidinol dehydrogenase family. Zn(2+) serves as cofactor.

It carries out the reaction L-histidinol + 2 NAD(+) + H2O = L-histidine + 2 NADH + 3 H(+). It functions in the pathway amino-acid biosynthesis; L-histidine biosynthesis; L-histidine from 5-phospho-alpha-D-ribose 1-diphosphate: step 9/9. Its function is as follows. Catalyzes the sequential NAD-dependent oxidations of L-histidinol to L-histidinaldehyde and then to L-histidine. This chain is Histidinol dehydrogenase, found in Sulfurisphaera tokodaii (strain DSM 16993 / JCM 10545 / NBRC 100140 / 7) (Sulfolobus tokodaii).